The following is a 495-amino-acid chain: 3-octaprenyl-4-hydroxybenzoate carboxy-lyase (495 aa).

N172 is a binding site for Mn(2+). Prenylated FMN is bound by residues 175–177 (IYR), 189–191 (RWL), and 194–195 (RG). E238 is a binding site for Mn(2+). Catalysis depends on D287, which acts as the Proton donor.

It belongs to the UbiD family. Homohexamer. Prenylated FMN is required as a cofactor. It depends on Mn(2+) as a cofactor.

The protein resides in the cell membrane. It catalyses the reaction a 4-hydroxy-3-(all-trans-polyprenyl)benzoate + H(+) = a 2-(all-trans-polyprenyl)phenol + CO2. It participates in cofactor biosynthesis; ubiquinone biosynthesis. Its function is as follows. Catalyzes the decarboxylation of 3-octaprenyl-4-hydroxy benzoate to 2-octaprenylphenol, an intermediate step in ubiquinone biosynthesis. The sequence is that of 3-octaprenyl-4-hydroxybenzoate carboxy-lyase from Edwardsiella ictaluri (strain 93-146).